Here is a 207-residue protein sequence, read N- to C-terminus: Guanylate kinase (207 aa).

A Guanylate kinase-like domain is found at 5–183 (GTLYIISAPS…ALYELEAIVE (179 aa)). ATP is bound at residue 12–19 (APSGAGKT).

This sequence belongs to the guanylate kinase family.

It localises to the cytoplasm. The enzyme catalyses GMP + ATP = GDP + ADP. Functionally, essential for recycling GMP and indirectly, cGMP. The sequence is that of Guanylate kinase from Alcanivorax borkumensis (strain ATCC 700651 / DSM 11573 / NCIMB 13689 / SK2).